A 571-amino-acid polypeptide reads, in one-letter code: MVTKILKAPDGSPSDVERIKKESDYLRGTLKEVMLDRISAGIPDDDNRLMKHHGSYLQDDRDLRNERQKQKLEPAYQFMLRVRMPGGVSTPEQWLVMDDLSQKYGNGTLKLTTRETFQMHGILKWNMKKTIQTIHSALLDTIAACGDVNRNVMCASNPYQSEIHSEVYEWSKKLSDDLLPRTRAYHEIWLDEERVAGTPEEEVEPMYGPLYLPRKFKIGIAVPPSNDIDVFSQDLGFIAIVEDGKLIGFNVAIGGGMGMTHGDTATYPQLAKVIGFCRPEQMYDVAEKTITIQRDYGNRSVRKNARFKYTVDRLGLENVKEELENRLGWSLEEAKPYHFDHNGDRYGWVEGIEDKWHFTLFVEGGRITDYDDYKLMTGLREIAKVHTGEFRLTANQNLMIANVSSDKKEEISALIEQYGLTDGKHYSALRRSSMACVALPTCGLAMAEAERYLPTLLDKIEEIIDENGLRDQEITIRMTGCPNGCARHALGEIGFIGKAPGKYNMYLGAAFDGSRLSKMYRENIGEADILSELRILLSRYAKEREEGEHFGDFVIRAGIIKATTDGTNFHD.

The [4Fe-4S] cluster site is built by Cys-436, Cys-442, Cys-481, and Cys-485. Cys-485 provides a ligand contact to siroheme.

Belongs to the nitrite and sulfite reductase 4Fe-4S domain family. As to quaternary structure, alpha(8)-beta(8). The alpha component is a flavoprotein, the beta component is a hemoprotein. Requires siroheme as cofactor. [4Fe-4S] cluster is required as a cofactor.

The enzyme catalyses hydrogen sulfide + 3 NADP(+) + 3 H2O = sulfite + 3 NADPH + 4 H(+). The protein operates within sulfur metabolism; hydrogen sulfide biosynthesis; hydrogen sulfide from sulfite (NADPH route): step 1/1. In terms of biological role, component of the sulfite reductase complex that catalyzes the 6-electron reduction of sulfite to sulfide. This is one of several activities required for the biosynthesis of L-cysteine from sulfate. This is Sulfite reductase [NADPH] hemoprotein beta-component (cysI) from Bacillus subtilis (strain 168).